Reading from the N-terminus, the 254-residue chain is Dihydroorotate dehydrogenase B (NAD(+)), electron transfer subunit (254 aa).

Positions 1–99 (MLQTEMKVIQ…LGPLGKGFDI (99 aa)) constitute an FAD-binding FR-type domain. FAD-binding positions include 50 to 53 (RPIS), 67 to 69 (LYR), and 74 to 75 (GT). Residues Cys218, Cys223, Cys226, and Cys241 each contribute to the [2Fe-2S] cluster site.

The protein belongs to the PyrK family. Heterotetramer of 2 PyrK and 2 PyrD type B subunits. The cofactor is [2Fe-2S] cluster. FAD serves as cofactor.

It functions in the pathway pyrimidine metabolism; UMP biosynthesis via de novo pathway; orotate from (S)-dihydroorotate (NAD(+) route): step 1/1. In terms of biological role, responsible for channeling the electrons from the oxidation of dihydroorotate from the FMN redox center in the PyrD type B subunit to the ultimate electron acceptor NAD(+). In Listeria monocytogenes serovar 1/2a (strain ATCC BAA-679 / EGD-e), this protein is Dihydroorotate dehydrogenase B (NAD(+)), electron transfer subunit.